The sequence spans 174 residues: NADH-quinone oxidoreductase subunit I (174 aa).

4Fe-4S ferredoxin-type domains lie at 44–74 (LNRYPDGLEKCIGCELCAWACPADAIYVEGD) and 90–119 (RVYQINYLRCIGCGLCIEACPTRALTMTND). [4Fe-4S] cluster is bound by residues Cys54, Cys57, Cys60, Cys64, Cys99, Cys102, Cys105, and Cys109.

The protein belongs to the complex I 23 kDa subunit family. In terms of assembly, NDH-1 is composed of 14 different subunits. Subunits NuoA, H, J, K, L, M, N constitute the membrane sector of the complex. The cofactor is [4Fe-4S] cluster.

It localises to the cell membrane. It carries out the reaction a quinone + NADH + 5 H(+)(in) = a quinol + NAD(+) + 4 H(+)(out). NDH-1 shuttles electrons from NADH, via FMN and iron-sulfur (Fe-S) centers, to quinones in the respiratory chain. The immediate electron acceptor for the enzyme in this species is believed to be menaquinone. Couples the redox reaction to proton translocation (for every two electrons transferred, four hydrogen ions are translocated across the cytoplasmic membrane), and thus conserves the redox energy in a proton gradient. In Mycobacterium sp. (strain KMS), this protein is NADH-quinone oxidoreductase subunit I.